The chain runs to 759 residues: 5-methyltetrahydropteroyltriglutamate--homocysteine methyltransferase (759 aa).

Polar residues predominate over residues 1-16 (MTQPVRRQPFTATITG). Positions 1-22 (MTQPVRRQPFTATITGSPRIGP) are disordered. Residues 24–27 (RELK) and Lys118 contribute to the 5-methyltetrahydropteroyltri-L-glutamate site. L-homocysteine-binding positions include 437–439 (IGS) and Glu490. L-methionine is bound by residues 437–439 (IGS) and Glu490. 5-methyltetrahydropteroyltri-L-glutamate contacts are provided by residues 521–522 (RC) and Trp567. L-homocysteine is bound at residue Asp605. Asp605 serves as a coordination point for L-methionine. Glu611 lines the 5-methyltetrahydropteroyltri-L-glutamate pocket. 3 residues coordinate Zn(2+): His647, Cys649, and Glu671. His700 acts as the Proton donor in catalysis. Cys732 provides a ligand contact to Zn(2+).

This sequence belongs to the vitamin-B12 independent methionine synthase family. It depends on Zn(2+) as a cofactor.

It catalyses the reaction 5-methyltetrahydropteroyltri-L-glutamate + L-homocysteine = tetrahydropteroyltri-L-glutamate + L-methionine. It participates in amino-acid biosynthesis; L-methionine biosynthesis via de novo pathway; L-methionine from L-homocysteine (MetE route): step 1/1. Its function is as follows. Catalyzes the transfer of a methyl group from 5-methyltetrahydrofolate to homocysteine resulting in methionine formation. The chain is 5-methyltetrahydropteroyltriglutamate--homocysteine methyltransferase from Mycobacterium tuberculosis (strain ATCC 25177 / H37Ra).